A 188-amino-acid chain; its full sequence is dTTP/UTP pyrophosphatase (188 aa).

Residue D67 is the Proton acceptor of the active site.

Belongs to the Maf family. YhdE subfamily. Requires a divalent metal cation as cofactor.

The protein localises to the cytoplasm. It catalyses the reaction dTTP + H2O = dTMP + diphosphate + H(+). The enzyme catalyses UTP + H2O = UMP + diphosphate + H(+). Functionally, nucleoside triphosphate pyrophosphatase that hydrolyzes dTTP and UTP. May have a dual role in cell division arrest and in preventing the incorporation of modified nucleotides into cellular nucleic acids. In Roseobacter denitrificans (strain ATCC 33942 / OCh 114) (Erythrobacter sp. (strain OCh 114)), this protein is dTTP/UTP pyrophosphatase.